A 452-amino-acid chain; its full sequence is Phosphoglucosamine mutase (452 aa).

The Phosphoserine intermediate role is filled by Ser101. Residues Ser101, Asp241, Asp243, and Asp245 each coordinate Mg(2+). Phosphoserine is present on Ser101.

It belongs to the phosphohexose mutase family. Mg(2+) serves as cofactor. In terms of processing, activated by phosphorylation.

It carries out the reaction alpha-D-glucosamine 1-phosphate = D-glucosamine 6-phosphate. Functionally, catalyzes the conversion of glucosamine-6-phosphate to glucosamine-1-phosphate. The protein is Phosphoglucosamine mutase of Lactococcus lactis subsp. cremoris (strain SK11).